A 289-amino-acid polypeptide reads, in one-letter code: ATP phosphoribosyltransferase (289 aa).

It belongs to the ATP phosphoribosyltransferase family. Long subfamily. Requires Mg(2+) as cofactor.

The protein resides in the cytoplasm. It carries out the reaction 1-(5-phospho-beta-D-ribosyl)-ATP + diphosphate = 5-phospho-alpha-D-ribose 1-diphosphate + ATP. Its pathway is amino-acid biosynthesis; L-histidine biosynthesis; L-histidine from 5-phospho-alpha-D-ribose 1-diphosphate: step 1/9. Its activity is regulated as follows. Feedback inhibited by histidine. Its function is as follows. Catalyzes the condensation of ATP and 5-phosphoribose 1-diphosphate to form N'-(5'-phosphoribosyl)-ATP (PR-ATP). Has a crucial role in the pathway because the rate of histidine biosynthesis seems to be controlled primarily by regulation of HisG enzymatic activity. The polypeptide is ATP phosphoribosyltransferase (Pelotomaculum thermopropionicum (strain DSM 13744 / JCM 10971 / SI)).